Consider the following 400-residue polypeptide: Tryptophan synthase beta chain (400 aa).

An N6-(pyridoxal phosphate)lysine modification is found at K95.

Belongs to the TrpB family. As to quaternary structure, tetramer of two alpha and two beta chains. Requires pyridoxal 5'-phosphate as cofactor.

It catalyses the reaction (1S,2R)-1-C-(indol-3-yl)glycerol 3-phosphate + L-serine = D-glyceraldehyde 3-phosphate + L-tryptophan + H2O. Its pathway is amino-acid biosynthesis; L-tryptophan biosynthesis; L-tryptophan from chorismate: step 5/5. The beta subunit is responsible for the synthesis of L-tryptophan from indole and L-serine. This chain is Tryptophan synthase beta chain, found in Chlorobaculum tepidum (strain ATCC 49652 / DSM 12025 / NBRC 103806 / TLS) (Chlorobium tepidum).